The sequence spans 159 residues: Transmembrane protein 42 (159 aa).

4 helical membrane passes run 37-57, 59-79, 100-120, and 124-144; these read FWGV…AASA, LAFG…VMAS, IASV…GYVL, and CQEV…TLIH.

The protein resides in the membrane. The chain is Transmembrane protein 42 (TMEM42) from Pongo abelii (Sumatran orangutan).